A 257-amino-acid chain; its full sequence is L-aspartate dehydrogenase (257 aa).

NAD(+) contacts are provided by alanine 124 and asparagine 180. Histidine 208 is an active-site residue.

The protein belongs to the L-aspartate dehydrogenase family.

It carries out the reaction L-aspartate + NADP(+) + H2O = oxaloacetate + NH4(+) + NADPH + H(+). It catalyses the reaction L-aspartate + NAD(+) + H2O = oxaloacetate + NH4(+) + NADH + H(+). It participates in cofactor biosynthesis; NAD(+) biosynthesis; iminoaspartate from L-aspartate (dehydrogenase route): step 1/1. Functionally, specifically catalyzes the NAD or NADP-dependent dehydrogenation of L-aspartate to iminoaspartate. This is L-aspartate dehydrogenase from Methanothermobacter thermautotrophicus (strain ATCC 29096 / DSM 1053 / JCM 10044 / NBRC 100330 / Delta H) (Methanobacterium thermoautotrophicum).